The primary structure comprises 157 residues: Ribosomal RNA large subunit methyltransferase H (157 aa).

Residues Leu73, Gly104, and 123 to 128 (LGPLTL) contribute to the S-adenosyl-L-methionine site.

This sequence belongs to the RNA methyltransferase RlmH family. Homodimer.

The protein resides in the cytoplasm. It carries out the reaction pseudouridine(1915) in 23S rRNA + S-adenosyl-L-methionine = N(3)-methylpseudouridine(1915) in 23S rRNA + S-adenosyl-L-homocysteine + H(+). In terms of biological role, specifically methylates the pseudouridine at position 1915 (m3Psi1915) in 23S rRNA. The polypeptide is Ribosomal RNA large subunit methyltransferase H (Xylella fastidiosa (strain M23)).